The chain runs to 1182 residues: DNA-directed RNA polymerase subunit beta (1182 aa).

This sequence belongs to the RNA polymerase beta chain family. The RNAP catalytic core consists of 2 alpha, 1 beta, 1 beta' and 1 omega subunit. When a sigma factor is associated with the core the holoenzyme is formed, which can initiate transcription.

The enzyme catalyses RNA(n) + a ribonucleoside 5'-triphosphate = RNA(n+1) + diphosphate. DNA-dependent RNA polymerase catalyzes the transcription of DNA into RNA using the four ribonucleoside triphosphates as substrates. In Fervidobacterium nodosum (strain ATCC 35602 / DSM 5306 / Rt17-B1), this protein is DNA-directed RNA polymerase subunit beta.